Reading from the N-terminus, the 485-residue chain is Ribulose bisphosphate carboxylase large chain (485 aa).

Substrate contacts are provided by Asn-124 and Thr-174. The active-site Proton acceptor is Lys-176. Lys-178 is a substrate binding site. Mg(2+) is bound by residues Lys-202, Asp-204, and Glu-205. Position 202 is an N6-carboxylysine (Lys-202). Catalysis depends on His-294, which acts as the Proton acceptor. Substrate-binding residues include Arg-295, His-327, and Ser-379.

It belongs to the RuBisCO large chain family. Type I subfamily. Heterohexadecamer of 8 large chains and 8 small chains. It depends on Mg(2+) as a cofactor.

The enzyme catalyses 2 (2R)-3-phosphoglycerate + 2 H(+) = D-ribulose 1,5-bisphosphate + CO2 + H2O. It catalyses the reaction D-ribulose 1,5-bisphosphate + O2 = 2-phosphoglycolate + (2R)-3-phosphoglycerate + 2 H(+). Functionally, ruBisCO catalyzes two reactions: the carboxylation of D-ribulose 1,5-bisphosphate, the primary event in carbon dioxide fixation, as well as the oxidative fragmentation of the pentose substrate. Both reactions occur simultaneously and in competition at the same active site. In Rhodopseudomonas palustris (strain TIE-1), this protein is Ribulose bisphosphate carboxylase large chain.